The sequence spans 350 residues: Methylthioribose-1-phosphate isomerase (350 aa).

Substrate-binding positions include 47 to 49 (RGA), arginine 90, and glutamine 197. Aspartate 238 acts as the Proton donor in catalysis. 248–249 (NK) is a binding site for substrate.

This sequence belongs to the eIF-2B alpha/beta/delta subunits family. MtnA subfamily.

The catalysed reaction is 5-(methylsulfanyl)-alpha-D-ribose 1-phosphate = 5-(methylsulfanyl)-D-ribulose 1-phosphate. Its pathway is amino-acid biosynthesis; L-methionine biosynthesis via salvage pathway; L-methionine from S-methyl-5-thio-alpha-D-ribose 1-phosphate: step 1/6. Its function is as follows. Catalyzes the interconversion of methylthioribose-1-phosphate (MTR-1-P) into methylthioribulose-1-phosphate (MTRu-1-P). This chain is Methylthioribose-1-phosphate isomerase, found in Nitratidesulfovibrio vulgaris (strain DP4) (Desulfovibrio vulgaris).